Consider the following 412-residue polypeptide: Multifunctional CCA protein (412 aa).

Gly8 and Arg11 together coordinate ATP. Positions 8 and 11 each coordinate CTP. Mg(2+)-binding residues include Glu21 and Asp23. ATP-binding residues include Arg91, Arg137, and Arg140. Residues Arg91, Arg137, and Arg140 each contribute to the CTP site. The 102-residue stretch at Thr228–Trp329 folds into the HD domain.

The protein belongs to the tRNA nucleotidyltransferase/poly(A) polymerase family. Bacterial CCA-adding enzyme type 1 subfamily. Monomer. Can also form homodimers and oligomers. The cofactor is Mg(2+). It depends on Ni(2+) as a cofactor.

It carries out the reaction a tRNA precursor + 2 CTP + ATP = a tRNA with a 3' CCA end + 3 diphosphate. The catalysed reaction is a tRNA with a 3' CCA end + 2 CTP + ATP = a tRNA with a 3' CCACCA end + 3 diphosphate. In terms of biological role, catalyzes the addition and repair of the essential 3'-terminal CCA sequence in tRNAs without using a nucleic acid template. Adds these three nucleotides in the order of C, C, and A to the tRNA nucleotide-73, using CTP and ATP as substrates and producing inorganic pyrophosphate. tRNA 3'-terminal CCA addition is required both for tRNA processing and repair. Also involved in tRNA surveillance by mediating tandem CCA addition to generate a CCACCA at the 3' terminus of unstable tRNAs. While stable tRNAs receive only 3'-terminal CCA, unstable tRNAs are marked with CCACCA and rapidly degraded. This is Multifunctional CCA protein from Yersinia pseudotuberculosis serotype I (strain IP32953).